The chain runs to 189 residues: UPF0301 protein CF0373 (189 aa).

Belongs to the UPF0301 (AlgH) family.

The polypeptide is UPF0301 protein CF0373 (Chlamydia felis (strain Fe/C-56) (Chlamydophila felis)).